The primary structure comprises 73 residues: UPF0346 protein LVIS_0790 (73 aa).

Belongs to the UPF0346 family.

The protein is UPF0346 protein LVIS_0790 of Levilactobacillus brevis (strain ATCC 367 / BCRC 12310 / CIP 105137 / JCM 1170 / LMG 11437 / NCIMB 947 / NCTC 947) (Lactobacillus brevis).